The chain runs to 418 residues: L-rhamnose isomerase (418 aa).

The Mn(2+) site is built by histidine 262, aspartate 294, and aspartate 296.

Belongs to the rhamnose isomerase family. As to quaternary structure, homotetramer. Mn(2+) is required as a cofactor.

It localises to the cytoplasm. It catalyses the reaction L-rhamnopyranose = L-rhamnulose. It functions in the pathway carbohydrate degradation; L-rhamnose degradation; glycerone phosphate from L-rhamnose: step 1/3. Its function is as follows. Catalyzes the interconversion of L-rhamnose and L-rhamnulose. This is L-rhamnose isomerase from Yersinia pestis bv. Antiqua (strain Antiqua).